A 282-amino-acid chain; its full sequence is Ribosome biogenesis GTPase A (282 aa).

The 165-residue stretch at Arg14–Pro178 folds into the CP-type G domain. GTP contacts are provided by residues Asn58–Asp61, Asn86–Ser87, Asn130–Thr135, and Gly174.

It belongs to the TRAFAC class YlqF/YawG GTPase family. MTG1 subfamily. Interacts with ctc. Interacts with the immature 50S ribosome subunit. 2 molecules of RbgA bind to one 50S subunit.

The protein resides in the cytoplasm. Its function is as follows. Essential protein that is required for a late step of 50S ribosomal subunit assembly. Has GTPase activity that is stimulated by interaction with the immature 50S ribosome subunit. Binds to the 23S rRNA. Required for the association of ribosomal proteins RplP and RpmA with the large subunit. This chain is Ribosome biogenesis GTPase A (rbgA), found in Bacillus subtilis (strain 168).